Reading from the N-terminus, the 185-residue chain is Peptidyl-tRNA hydrolase (185 aa).

Tyr-14 provides a ligand contact to tRNA. His-19 acts as the Proton acceptor in catalysis. Residues Tyr-65, Asn-67, and Asn-113 each contribute to the tRNA site.

This sequence belongs to the PTH family. Monomer.

The protein resides in the cytoplasm. The catalysed reaction is an N-acyl-L-alpha-aminoacyl-tRNA + H2O = an N-acyl-L-amino acid + a tRNA + H(+). In terms of biological role, hydrolyzes ribosome-free peptidyl-tRNAs (with 1 or more amino acids incorporated), which drop off the ribosome during protein synthesis, or as a result of ribosome stalling. Catalyzes the release of premature peptidyl moieties from peptidyl-tRNA molecules trapped in stalled 50S ribosomal subunits, and thus maintains levels of free tRNAs and 50S ribosomes. The sequence is that of Peptidyl-tRNA hydrolase from Rickettsia typhi (strain ATCC VR-144 / Wilmington).